We begin with the raw amino-acid sequence, 599 residues long: UvrABC system protein C (599 aa).

The region spanning 18 to 96 is the GIY-YIG domain; sequence QLPGVYKMLG…IKQHRPPYNI (79 aa). Positions 207-242 constitute a UVR domain; the sequence is KELNQELIAKMEQAAADLEFEKAVFYRDRLSLLREV.

It belongs to the UvrC family. As to quaternary structure, interacts with UvrB in an incision complex.

It is found in the cytoplasm. Functionally, the UvrABC repair system catalyzes the recognition and processing of DNA lesions. UvrC both incises the 5' and 3' sides of the lesion. The N-terminal half is responsible for the 3' incision and the C-terminal half is responsible for the 5' incision. In Acinetobacter baumannii (strain SDF), this protein is UvrABC system protein C.